The following is a 382-amino-acid chain: MSLDWMPREHGLKNHSRHTEQWWGTEAPCTVYEKRPLKDPKGNVVPGLYSAWIRLNNPGQYNSYTTEMVKGVIAGFENSSTDREVVAVVFTGTGPNAFCTGGNTKEYSEYYSMRPEEYGSYMELFNNMVDSILMCKKPVICRVNGMRVAGGQEIGTATDITVSSDLAIFGQAGPRHGSAPVGGASDFLPWFLSIEDAMWNCVSCEMWSAYKMKAKNLISKALPVLKDDKGNWVRNPQVYTDTYVKDGEIVYGEPKTGEEAKQARAWVNEKLKNNDYDFSLIDAEVDRIVWVFANLFPGCLMKSIDGIRQKKKFWWDQIKNDHRYWLGTNMMGEAFLGFGAFNTKKITGKDTIDFIKNRQLIAEGALVDEAFMEQVLGKPLAK.

Belongs to the enoyl-CoA hydratase/isomerase family. In terms of assembly, homohexamer.

It carries out the reaction 6-oxocyclohex-1-ene-1-carbonyl-CoA + 2 H2O = 3-hydroxy-6-carboxyhexanoyl-CoA + H(+). The protein operates within aromatic compound metabolism; benzoyl-CoA degradation. Functionally, involved in the central benzoyl-CoA catabolism. Catalyzes the addition of one molecule of water to the double bond and the hydrolytic cleavage of C-C bond in the alicyclic ring, 6-oxocyclohex-1-ene-1-carbonyl-CoA (6-OCH-CoA) to yield 3-hydroxypimelyl-CoA. In Syntrophus aciditrophicus (strain SB), this protein is 6-oxocyclohex-1-ene-1-carbonyl-CoA hydrolase.